The primary structure comprises 1535 residues: Putative protein TIC 214 C-terminal part (1535 aa).

Disordered stretches follow at residues 264–283 (ENQKKNGKQPVDTIKNNSND), 312–333 (EQQEEENPEESTGNPGIRSRKA), and 1263–1282 (DYKESDIQKPRTKAQSKNNK).

Belongs to the TIC214 family. In terms of assembly, part of the Tic complex.

Its subcellular location is the plastid. The protein resides in the chloroplast. Functionally, involved in protein precursor import into chloroplasts. May be part of an intermediate translocation complex acting as a protein-conducting channel at the inner envelope. In Piper cenocladum (Ant piper), this protein is Putative protein TIC 214 C-terminal part.